Reading from the N-terminus, the 147-residue chain is VEWTDAERSAIIALWGKLNPDELGPEALARCLIVYPWTQRFFASYGNLSSPAAIMGNPKVAAHGRTVEGGLMRAIKDMDNIKATYAPLSVMHSEKLHVDPDNFRLLADCITVCAAMKFGPSGFSPNVQEAWQKFLSVVVNALKRQYH.

Residues 2–147 (EWTDAERSAI…VVNALKRQYH (146 aa)) enclose the Globin domain. Residues His63 and His92 each contribute to the heme b site.

Belongs to the globin family. As to quaternary structure, heterotetramer of two alpha chains and two beta chains. As to expression, red blood cells.

Involved in oxygen transport from gills to the various peripheral tissues. This chain is Hemoglobin subunit beta-A/B, found in Cyprinus carpio (Common carp).